Consider the following 76-residue polypeptide: Omega-agatoxin-Aa3b (76 aa).

Cystine bridges form between cysteine 2–cysteine 19, cysteine 9–cysteine 25, cysteine 16–cysteine 52, cysteine 18–cysteine 40, cysteine 27–cysteine 38, and cysteine 59–cysteine 67.

This sequence belongs to the neurotoxin 04 (omega-agtx) family. 03 (type II/III omega-agtx) subfamily. Expressed by the venom gland.

It localises to the secreted. Omega-agatoxins are antagonists of voltage-gated calcium channels. This toxin blocks calcium channels in insect central neurons but not at peripheral neuromuscular junctions. In vertebrates, it is broadly active against all high-threshold Cav1/CACNA1 channels and Cav2.2/CACNA1B channels. In Agelenopsis aperta (North American funnel-web spider), this protein is Omega-agatoxin-Aa3b.